The chain runs to 385 residues: D-alanine--D-alanine ligase (385 aa).

In terms of domain architecture, ATP-grasp spans 165 to 375 (KRVFTSFGLK…YPELVDRLVE (211 aa)). Residue 201–256 (AGEHGWPLFVKPARAGSSIGITKVDDLAGLDEAVAEAQRHDPKIIVEALLRGREIE) participates in ATP binding. D329, E342, and N344 together coordinate Mg(2+).

It belongs to the D-alanine--D-alanine ligase family. It depends on Mg(2+) as a cofactor. Requires Mn(2+) as cofactor.

It localises to the cytoplasm. The catalysed reaction is 2 D-alanine + ATP = D-alanyl-D-alanine + ADP + phosphate + H(+). Its pathway is cell wall biogenesis; peptidoglycan biosynthesis. In terms of biological role, cell wall formation. The polypeptide is D-alanine--D-alanine ligase (Streptomyces avermitilis (strain ATCC 31267 / DSM 46492 / JCM 5070 / NBRC 14893 / NCIMB 12804 / NRRL 8165 / MA-4680)).